A 302-amino-acid polypeptide reads, in one-letter code: Bifunctional protein FolD 2 (302 aa).

Residues 170–172 (GRS), S195, and I236 each bind NADP(+).

It belongs to the tetrahydrofolate dehydrogenase/cyclohydrolase family. Homodimer.

The enzyme catalyses (6R)-5,10-methylene-5,6,7,8-tetrahydrofolate + NADP(+) = (6R)-5,10-methenyltetrahydrofolate + NADPH. It carries out the reaction (6R)-5,10-methenyltetrahydrofolate + H2O = (6R)-10-formyltetrahydrofolate + H(+). It participates in one-carbon metabolism; tetrahydrofolate interconversion. Functionally, catalyzes the oxidation of 5,10-methylenetetrahydrofolate to 5,10-methenyltetrahydrofolate and then the hydrolysis of 5,10-methenyltetrahydrofolate to 10-formyltetrahydrofolate. The sequence is that of Bifunctional protein FolD 2 from Paracoccus denitrificans (strain Pd 1222).